The sequence spans 228 residues: Probable septum site-determining protein MinC (228 aa).

It belongs to the MinC family. Interacts with MinD and FtsZ.

Its function is as follows. Cell division inhibitor that blocks the formation of polar Z ring septums. Rapidly oscillates between the poles of the cell to destabilize FtsZ filaments that have formed before they mature into polar Z rings. Prevents FtsZ polymerization. In Bacillus anthracis (strain A0248), this protein is Probable septum site-determining protein MinC.